Consider the following 250-residue polypeptide: MSGHSKWATTKHKKAANDAKRGKEFAKLIKNIEVAARTGGGDPSANPTLDDMIKKAKKASVPNDNIERARKRGSGEEAGGADWETVTYEGYGNGGVAILIECLTDNRNRAATDVRTAMNKNGGNMADAGSVAYMFNRKGVVQLPKEGNTEDDILMAVLDAGAEEVNDLGQNFEVVSAAGDLSAVRDALKEAGLEYDSAEPDYRADVKVQLDASGARKIFHLIDALEDSDDVQNVYTNMDLSDEVLAELDN.

Residues M1–G22 are disordered.

This sequence belongs to the TACO1 family.

It is found in the cytoplasm. In Corynebacterium kroppenstedtii (strain DSM 44385 / JCM 11950 / CIP 105744 / CCUG 35717), this protein is Probable transcriptional regulatory protein ckrop_1032.